The chain runs to 96 residues: uncharacterized protein (96 aa).

Residues 1-21 (MSDFEIIVGISSLLQVIILNI) traverse the membrane as a helical segment.

The protein resides in the membrane. This is an uncharacterized protein from Saccharomyces cerevisiae (strain ATCC 204508 / S288c) (Baker's yeast).